A 452-amino-acid chain; its full sequence is Bifunctional protein GlmU (452 aa).

The segment at 1–226 is pyrophosphorylase; sequence MKNIHAIILA…KFEIAGVNDK (226 aa). UDP-N-acetyl-alpha-D-glucosamine contacts are provided by residues 9–12, Lys-23, Gln-73, 78–79, 100–102, Gly-137, Glu-151, Asn-166, and Asn-224; these read LAAG, GT, and YGD. Asp-102 serves as a coordination point for Mg(2+). Position 224 (Asn-224) interacts with Mg(2+). Residues 227-247 form a linker region; sequence VQLAELERIFQINQATQFMQQ. The interval 248–452 is N-acetyltransferase; that stretch reads GLSLKDPNRF…LKNWQRPTKK (205 aa). Positions 330 and 348 each coordinate UDP-N-acetyl-alpha-D-glucosamine. The active-site Proton acceptor is the His-360. Residues Tyr-363 and Asn-374 each contribute to the UDP-N-acetyl-alpha-D-glucosamine site. Acetyl-CoA is bound by residues Ala-377, 383–384, Ser-402, Ala-420, and Arg-437; that span reads NY.

The protein in the N-terminal section; belongs to the N-acetylglucosamine-1-phosphate uridyltransferase family. It in the C-terminal section; belongs to the transferase hexapeptide repeat family. In terms of assembly, homotrimer. Requires Mg(2+) as cofactor.

It localises to the cytoplasm. It catalyses the reaction alpha-D-glucosamine 1-phosphate + acetyl-CoA = N-acetyl-alpha-D-glucosamine 1-phosphate + CoA + H(+). The enzyme catalyses N-acetyl-alpha-D-glucosamine 1-phosphate + UTP + H(+) = UDP-N-acetyl-alpha-D-glucosamine + diphosphate. Its pathway is nucleotide-sugar biosynthesis; UDP-N-acetyl-alpha-D-glucosamine biosynthesis; N-acetyl-alpha-D-glucosamine 1-phosphate from alpha-D-glucosamine 6-phosphate (route II): step 2/2. It participates in nucleotide-sugar biosynthesis; UDP-N-acetyl-alpha-D-glucosamine biosynthesis; UDP-N-acetyl-alpha-D-glucosamine from N-acetyl-alpha-D-glucosamine 1-phosphate: step 1/1. It functions in the pathway bacterial outer membrane biogenesis; LPS lipid A biosynthesis. Its function is as follows. Catalyzes the last two sequential reactions in the de novo biosynthetic pathway for UDP-N-acetylglucosamine (UDP-GlcNAc). The C-terminal domain catalyzes the transfer of acetyl group from acetyl coenzyme A to glucosamine-1-phosphate (GlcN-1-P) to produce N-acetylglucosamine-1-phosphate (GlcNAc-1-P), which is converted into UDP-GlcNAc by the transfer of uridine 5-monophosphate (from uridine 5-triphosphate), a reaction catalyzed by the N-terminal domain. The polypeptide is Bifunctional protein GlmU (Ruthia magnifica subsp. Calyptogena magnifica).